Here is a 124-residue protein sequence, read N- to C-terminus: UPF0344 protein OB1184 (124 aa).

The next 4 helical transmembrane spans lie at 3–23 (HMHI…LVMY), 33–53 (IIHM…GILT), 62–82 (MPIL…VAMM), and 104–124 (IALV…FLFI).

This sequence belongs to the UPF0344 family.

It localises to the cell membrane. This is UPF0344 protein OB1184 from Oceanobacillus iheyensis (strain DSM 14371 / CIP 107618 / JCM 11309 / KCTC 3954 / HTE831).